The primary structure comprises 308 residues: 4-diphosphocytidyl-2-C-methyl-D-erythritol kinase (308 aa).

Lys-23 is a catalytic residue. Position 108 to 118 (108 to 118 (PVAAGIGGGSA)) interacts with ATP. The active site involves Asp-150.

This sequence belongs to the GHMP kinase family. IspE subfamily.

It catalyses the reaction 4-CDP-2-C-methyl-D-erythritol + ATP = 4-CDP-2-C-methyl-D-erythritol 2-phosphate + ADP + H(+). Its pathway is isoprenoid biosynthesis; isopentenyl diphosphate biosynthesis via DXP pathway; isopentenyl diphosphate from 1-deoxy-D-xylulose 5-phosphate: step 3/6. Functionally, catalyzes the phosphorylation of the position 2 hydroxy group of 4-diphosphocytidyl-2C-methyl-D-erythritol. The sequence is that of 4-diphosphocytidyl-2-C-methyl-D-erythritol kinase from Nitrobacter winogradskyi (strain ATCC 25391 / DSM 10237 / CIP 104748 / NCIMB 11846 / Nb-255).